The primary structure comprises 489 residues: Betaine aldehyde dehydrogenase (489 aa).

Positions 26 and 93 each coordinate K(+). 150–152 (GAW) is an NAD(+) binding site. K162 serves as the catalytic Charge relay system. 176-179 (KPSE) lines the NAD(+) pocket. Position 180 (V180) interacts with K(+). 229-232 (GVET) is a binding site for NAD(+). L245 is a K(+) binding site. E251 serves as the catalytic Proton acceptor. Residues G253, C285, and E386 each coordinate NAD(+). C285 serves as the catalytic Nucleophile. Cysteine sulfenic acid (-SOH) is present on C285. 2 residues coordinate K(+): K456 and G459. Catalysis depends on E463, which acts as the Charge relay system.

Belongs to the aldehyde dehydrogenase family. As to quaternary structure, dimer of dimers. The cofactor is K(+).

The catalysed reaction is betaine aldehyde + NAD(+) + H2O = glycine betaine + NADH + 2 H(+). The protein operates within amine and polyamine biosynthesis; betaine biosynthesis via choline pathway; betaine from betaine aldehyde: step 1/1. Its function is as follows. Involved in the biosynthesis of the osmoprotectant glycine betaine. Catalyzes the irreversible oxidation of betaine aldehyde to the corresponding acid. The sequence is that of Betaine aldehyde dehydrogenase from Burkholderia pseudomallei (strain K96243).